Reading from the N-terminus, the 387-residue chain is Dual-specificity RNA methyltransferase RlmN (387 aa).

E110 serves as the catalytic Proton acceptor. A Radical SAM core domain is found at 117-349 (VGKAGALCVS…NRAGYASPIR (233 aa)). C124 and C360 are disulfide-bonded. [4Fe-4S] cluster is bound by residues C131, C135, and C138. S-adenosyl-L-methionine contacts are provided by residues 186 to 187 (GE), S218, 240 to 242 (SLH), and N317. The active-site S-methylcysteine intermediate is C360.

Belongs to the radical SAM superfamily. RlmN family. Requires [4Fe-4S] cluster as cofactor.

Its subcellular location is the cytoplasm. The catalysed reaction is adenosine(2503) in 23S rRNA + 2 reduced [2Fe-2S]-[ferredoxin] + 2 S-adenosyl-L-methionine = 2-methyladenosine(2503) in 23S rRNA + 5'-deoxyadenosine + L-methionine + 2 oxidized [2Fe-2S]-[ferredoxin] + S-adenosyl-L-homocysteine. It carries out the reaction adenosine(37) in tRNA + 2 reduced [2Fe-2S]-[ferredoxin] + 2 S-adenosyl-L-methionine = 2-methyladenosine(37) in tRNA + 5'-deoxyadenosine + L-methionine + 2 oxidized [2Fe-2S]-[ferredoxin] + S-adenosyl-L-homocysteine. Its function is as follows. Specifically methylates position 2 of adenine 2503 in 23S rRNA and position 2 of adenine 37 in tRNAs. m2A2503 modification seems to play a crucial role in the proofreading step occurring at the peptidyl transferase center and thus would serve to optimize ribosomal fidelity. The sequence is that of Dual-specificity RNA methyltransferase RlmN from Hyphomonas neptunium (strain ATCC 15444).